A 209-amino-acid polypeptide reads, in one-letter code: Kynurenine formamidase (209 aa).

W18 provides a ligand contact to substrate. Zn(2+) contacts are provided by H48, H52, and D54. The Proton donor/acceptor role is filled by H58. Residues H160 and E172 each coordinate Zn(2+).

It belongs to the Cyclase 1 superfamily. KynB family. As to quaternary structure, homodimer. Zn(2+) serves as cofactor.

The enzyme catalyses N-formyl-L-kynurenine + H2O = L-kynurenine + formate + H(+). Its pathway is amino-acid degradation; L-tryptophan degradation via kynurenine pathway; L-kynurenine from L-tryptophan: step 2/2. Functionally, catalyzes the hydrolysis of N-formyl-L-kynurenine to L-kynurenine, the second step in the kynurenine pathway of tryptophan degradation. The protein is Kynurenine formamidase of Sphingopyxis alaskensis (strain DSM 13593 / LMG 18877 / RB2256) (Sphingomonas alaskensis).